A 408-amino-acid polypeptide reads, in one-letter code: Neutral cholesterol ester hydrolase 1 (408 aa).

Topologically, residues 1–4 (MRSS) are cytoplasmic. The helical; Signal-anchor for type II membrane protein transmembrane segment at 5–25 (CVLLTALLALAAYYIYIPLPS) threads the bilayer. The Lumenal portion of the chain corresponds to 26 to 408 (SVSDPWKLML…SYIKWLDQNL (383 aa)). The short motif at 113–115 (HGG) is the Involved in the stabilization of the negatively charged intermediate by the formation of the oxyanion hole element. The active site involves S191. N-linked (GlcNAc...) asparagine glycans are attached at residues N270 and N287. Catalysis depends on residues D348 and H378. The N-linked (GlcNAc...) asparagine glycan is linked to N389.

Belongs to the 'GDXG' lipolytic enzyme family. Post-translationally, N-glycosylated.

The protein resides in the cell membrane. It is found in the microsome. It carries out the reaction a 1-O-alkyl-2-acetyl-sn-glycerol + H2O = a 1-O-alkyl-sn-glycerol + acetate + H(+). The catalysed reaction is 1-O-hexadecyl-2-acetyl-sn-glycerol + H2O = 1-O-hexadecyl-sn-glycerol + acetate + H(+). The enzyme catalyses a cholesterol ester + H2O = cholesterol + a fatty acid + H(+). It catalyses the reaction cholesteryl (9Z-octadecenoate) + H2O = cholesterol + (9Z)-octadecenoate + H(+). Functionally, hydrolyzes 2-acetyl monoalkylglycerol ether (1-O-alkyl-2-acetyl-sn-glycerol), the penultimate precursor of the pathway for de novo synthesis of platelet-activating factor. May be responsible for the hydrolysis of cholesterol esters (such as cholesteryl (9Z-octadecenoate)) in macrophages. Also involved in organ detoxification by hydrolyzing exogenous organophosphorus compounds. The protein is Neutral cholesterol ester hydrolase 1 (NCEH1) of Bos taurus (Bovine).